Consider the following 128-residue polypeptide: KHDC1-like protein (128 aa).

The protein belongs to the KHDC1 family.

This Homo sapiens (Human) protein is KHDC1-like protein (KHDC1L).